Consider the following 328-residue polypeptide: Phosphatidylglycerol--prolipoprotein diacylglyceryl transferase (328 aa).

The next 3 helical transmembrane spans lie at 15-35 (VIQGIPITWYSLSYILIILIS), 57-77 (IFMFSLVLGAILGGRLASTLV), and 106-126 (GMAIHGGFLGAIIAPLITINT). Residue Arg-156 participates in a 1,2-diacyl-sn-glycero-3-phospho-(1'-sn-glycerol) binding. Helical transmembrane passes span 242–262 (GFIFGVYVMLYAFFRFFIEYL) and 289–309 (ISMGQILSLTLMLSGLIWIIV).

The protein belongs to the Lgt family.

It is found in the cell inner membrane. The enzyme catalyses L-cysteinyl-[prolipoprotein] + a 1,2-diacyl-sn-glycero-3-phospho-(1'-sn-glycerol) = an S-1,2-diacyl-sn-glyceryl-L-cysteinyl-[prolipoprotein] + sn-glycerol 1-phosphate + H(+). Its pathway is protein modification; lipoprotein biosynthesis (diacylglyceryl transfer). In terms of biological role, catalyzes the transfer of the diacylglyceryl group from phosphatidylglycerol to the sulfhydryl group of the N-terminal cysteine of a prolipoprotein, the first step in the formation of mature lipoproteins. The protein is Phosphatidylglycerol--prolipoprotein diacylglyceryl transferase of Borreliella burgdorferi (strain ZS7) (Borrelia burgdorferi).